Consider the following 775-residue polypeptide: Serine/threonine-protein kinase-like protein CCR1 (775 aa).

Positions methionine 1 to glycine 23 are cleaved as a signal peptide. The Extracellular portion of the chain corresponds to phenylalanine 24 to leucine 439. N-linked (GlcNAc...) asparagine glycosylation is found at asparagine 57, asparagine 102, asparagine 167, asparagine 213, asparagine 220, asparagine 241, asparagine 261, asparagine 292, asparagine 328, and asparagine 360. Residues proline 351–cysteine 406 form a TNFR-Cys repeat. Intrachain disulfides connect cysteine 352-cysteine 381, cysteine 384-cysteine 398, and cysteine 388-cysteine 406. N-linked (GlcNAc...) asparagine glycosylation is present at asparagine 414. A helical transmembrane segment spans residues valine 440–valine 460. Topologically, residues proline 461–phenylalanine 775 are cytoplasmic. Positions phenylalanine 520–arginine 770 constitute a Protein kinase domain. ATP-binding positions include leucine 526–valine 534 and lysine 548. The Proton acceptor role is filled by aspartate 645.

Belongs to the protein kinase superfamily. Ser/Thr protein kinase family. Homodimer. Expressed in roots, leaves, shoot apical meristems (SAM), and floral buds.

It is found in the membrane. The enzyme catalyses L-seryl-[protein] + ATP = O-phospho-L-seryl-[protein] + ADP + H(+). It catalyses the reaction L-threonyl-[protein] + ATP = O-phospho-L-threonyl-[protein] + ADP + H(+). Serine/threonine-protein kinase with low activity. This Arabidopsis thaliana (Mouse-ear cress) protein is Serine/threonine-protein kinase-like protein CCR1 (CCR1).